The following is a 104-amino-acid chain: UPF0235 protein M446_3939 (104 aa).

Belongs to the UPF0235 family.

This chain is UPF0235 protein M446_3939, found in Methylobacterium sp. (strain 4-46).